Here is a 258-residue protein sequence, read N- to C-terminus: E3 ubiquitin ligase TRIM40 (258 aa).

The RING-type zinc-finger motif lies at 14–56 (CPICQESLKEAVSTNCGHLFCRVCLTQHVEKASASGVFCCPLC). The B box-type zinc-finger motif lies at 66–107 (GTGYICPNHQKRVCRFCEESRLLLCVECLVSPEHMSHHELTI). Zn(2+) contacts are provided by cysteine 71, histidine 74, cysteine 93, and histidine 99. Residues 107–159 (IENALSHYKERLNRRSRKLRKDIAELQRLKAQQEKKLQALQFQVDHGNHRLEA) are a coiled coil.

It belongs to the TRIM/RBCC family. Interacts with NEDD8. Highly expressed in normal gastrointestinal epithelia but that is down-regulated in gastrointestinal carcinomas and chronic inflammatory lesions of the gastrointestinal tract.

The catalysed reaction is S-ubiquitinyl-[E2 ubiquitin-conjugating enzyme]-L-cysteine + [acceptor protein]-L-lysine = [E2 ubiquitin-conjugating enzyme]-L-cysteine + N(6)-ubiquitinyl-[acceptor protein]-L-lysine.. Functionally, E3 ubiquitin-protein ligase that plays a role in the limitation of the innate immune response. Mediates inhibition of the RLR signaling pathway by ubiquitinating RIGI and IFIH1 receptors, leading to their proteasomal degradation. Also promotes the neddylation of IKBKG/NEMO, stabilizing NFKBIA, and thereby inhibiting of NF-kappa-B nuclear translocation and activation. The sequence is that of E3 ubiquitin ligase TRIM40 (TRIM40) from Homo sapiens (Human).